A 319-amino-acid chain; its full sequence is Acetyl-coenzyme A carboxylase carboxyl transferase subunit alpha (319 aa).

The CoA carboxyltransferase C-terminal domain maps to 35 to 296 (NIDEEVHRLR…KAQLLADLAD (262 aa)).

The protein belongs to the AccA family. As to quaternary structure, acetyl-CoA carboxylase is a heterohexamer composed of biotin carboxyl carrier protein (AccB), biotin carboxylase (AccC) and two subunits each of ACCase subunit alpha (AccA) and ACCase subunit beta (AccD).

Its subcellular location is the cytoplasm. It carries out the reaction N(6)-carboxybiotinyl-L-lysyl-[protein] + acetyl-CoA = N(6)-biotinyl-L-lysyl-[protein] + malonyl-CoA. It participates in lipid metabolism; malonyl-CoA biosynthesis; malonyl-CoA from acetyl-CoA: step 1/1. Functionally, component of the acetyl coenzyme A carboxylase (ACC) complex. First, biotin carboxylase catalyzes the carboxylation of biotin on its carrier protein (BCCP) and then the CO(2) group is transferred by the carboxyltransferase to acetyl-CoA to form malonyl-CoA. This is Acetyl-coenzyme A carboxylase carboxyl transferase subunit alpha from Klebsiella pneumoniae subsp. pneumoniae (strain ATCC 700721 / MGH 78578).